The chain runs to 822 residues: Integrator complex assembly factor BRAT1 (822 aa).

Residues 100–200 (LGLFGESGAP…WPMCAQKIVN (101 aa)) are required for interaction with NDFIP1. HEAT repeat units lie at residues 495 to 531 (LLFL…IRHW) and 544 to 576 (SEVP…SSQG). Serine 743 is subject to Phosphoserine. Positions 820 to 822 (DCY) match the BRAT1-like motif motif. Cysteine 821 is a binding site for Zn(2+).

It belongs to the BRAT1 family. As to quaternary structure, part of the multiprotein complex composed of BRAT1, WDR73, as well as integrator complex subunits INTS9 and INTS11. Interacts with BRCA1 and ATM. Interacts with MTOR and RPTOR. Interacts with NDFIP1. Interacts with SMC1A and PRKDC. Post-translationally, ubiquitinated by NEDD4, NEDD4L and ITCH; mono- and polyubiquitinated forms are detected. High levels detected in the cortex and much lower levels detected in the cerebellum, spinal cord and lung (at protein level).

It is found in the nucleus. The protein resides in the cytoplasm. In terms of biological role, component of a multiprotein complex required for the assembly of the RNA endonuclease module of the integrator complex. Associates with INTS9 and INTS11 in the cytoplasm and blocks the active site of INTS11 to inhibit the endonuclease activity of INTS11 before formation of the full integrator complex. Following dissociation of WDR73 of the complex, BRAT1 facilitates the nuclear import of the INTS9-INTS11 heterodimer. In the nucleus, INTS4 is integrated to the INTS9-INTS11 heterodimer and BRAT1 is released from the mature RNA endonuclease module by inositol hexakisphosphate (InsP6). BRAT1 is also involved in DNA damage response; activates kinases ATM, SMC1A and PRKDC by modulating their phosphorylation status following ionizing radiation (IR) stress. Plays a role in regulating mitochondrial function and cell proliferation. Required for protein stability of MTOR and MTOR-related proteins, and cell cycle progress by growth factors. This is Integrator complex assembly factor BRAT1 from Mus musculus (Mouse).